A 402-amino-acid polypeptide reads, in one-letter code: Metacaspase-1 (402 aa).

Residues 1 to 79 are disordered; it reads MAYPGQGGHH…FAPPSGPIGP (79 aa). Over residues 23–45 the composition is skewed to low complexity; sequence PAPHGYAQPGYGYAPPSGPPQGY. Residues His-193 and Cys-249 contribute to the active site.

Belongs to the peptidase C14B family.

Its function is as follows. Involved in cell death (apoptosis). This is Metacaspase-1 (MCA1) from Mycosarcoma maydis (Corn smut fungus).